The following is a 264-amino-acid chain: Catenin delta-2 (264 aa).

4 ARM repeats span residues 20–59 (NKIK…NLVY), 64–104 (DDNK…NLSS), 120–162 (LTNA…NVSS), and 166–211 (EARR…NLSY). The tract at residues 238–264 (GKDAESSGCWGKKKKKKKSQDQWDGVG) is disordered.

It belongs to the beta-catenin family. As to quaternary structure, binds to E-cadherin at a juxtamembrane site within the cytoplasmic domain. Binds to PSEN1. Interacts with ZBTB33. Interacts with ARHGEF28. Interacts (via the extreme C-terminus) with FRMPD2 (via the PDZ 2 domain). Interacts with PDZD2. Interacts with CDK5. Interacts with CTNBB1. Interacts with GSK3A and GSK3B. Interacts with DNM2. Interacts with CCDC85B. In terms of processing, O-glycosylated. Phosphorylated by CDK5. Phosphorylated by GSK3B. As to expression, predominantly expressed in brain; accumulates in cortical neurons (at protein level).

It localises to the nucleus. The protein localises to the cell junction. The protein resides in the adherens junction. It is found in the cell projection. Its subcellular location is the dendrite. It localises to the perikaryon. Functionally, has a critical role in neuronal development, particularly in the formation and/or maintenance of dendritic spines and synapses. Involved in the regulation of canonical Wnt signaling. It probably acts on beta-catenin turnover, facilitating beta-catenin interaction with GSK3B, phosphorylation, ubiquitination and degradation. May be involved in neuronal cell adhesion and tissue morphogenesis and integrity by regulating adhesion molecules. Functions as a transcriptional activator when bound to ZBTB33. This Rattus norvegicus (Rat) protein is Catenin delta-2 (Ctnnd2).